Here is a 242-residue protein sequence, read N- to C-terminus: Lactate utilization protein A 2 (242 aa).

The protein belongs to the LutA/YkgE family.

Is involved in L-lactate degradation and allows cells to grow with lactate as the sole carbon source. The chain is Lactate utilization protein A 2 from Bacillus cereus (strain AH820).